A 536-amino-acid chain; its full sequence is Protein ST7 homolog (536 aa).

2 consecutive transmembrane segments (helical) span residues 3–23 (CSWTFLWLLWIAMVAVLLFFL) and 49–69 (FYVALTGTSSLVSGIILIFEW). A coiled-coil region spans residues 192-219 (AEEDTETVAQAENVLRRALRAIENTLST). Residues 464–484 (STLGMLIQTFACLAICILAVL) traverse the membrane as a helical segment.

It belongs to the ST7 family.

It localises to the membrane. The protein is Protein ST7 homolog of Caenorhabditis briggsae.